The primary structure comprises 395 residues: Putative 8-amino-7-oxononanoate synthase (395 aa).

R23 contacts substrate. Position 110 to 111 (110 to 111 (GF)) interacts with pyridoxal 5'-phosphate. H135 lines the substrate pocket. Residues S182, 207-210 (DEAH), and 239-242 (TFSK) each bind pyridoxal 5'-phosphate. K242 is subject to N6-(pyridoxal phosphate)lysine. Substrate is bound at residue T356.

This sequence belongs to the class-II pyridoxal-phosphate-dependent aminotransferase family. BioF subfamily. Homodimer. Requires pyridoxal 5'-phosphate as cofactor.

It catalyses the reaction 6-carboxyhexanoyl-[ACP] + L-alanine + H(+) = (8S)-8-amino-7-oxononanoate + holo-[ACP] + CO2. The protein operates within cofactor biosynthesis; biotin biosynthesis. Its function is as follows. Catalyzes the decarboxylative condensation of pimeloyl-[acyl-carrier protein] and L-alanine to produce 8-amino-7-oxononanoate (AON), [acyl-carrier protein], and carbon dioxide. The protein is Putative 8-amino-7-oxononanoate synthase (bioF) of Bacillus anthracis.